The primary structure comprises 184 residues: Ribosome-recycling factor (184 aa).

Belongs to the RRF family.

It localises to the cytoplasm. In terms of biological role, responsible for the release of ribosomes from messenger RNA at the termination of protein biosynthesis. May increase the efficiency of translation by recycling ribosomes from one round of translation to another. In Staphylococcus carnosus (strain TM300), this protein is Ribosome-recycling factor.